Consider the following 134-residue polypeptide: Fluoride-specific ion channel FluC (134 aa).

Transmembrane regions (helical) follow at residues Leu-7 to Ala-27, Gly-38 to Val-58, Leu-69 to Ser-89, and Val-110 to His-130. The Na(+) site is built by Gly-77 and Thr-80.

The protein belongs to the fluoride channel Fluc/FEX (TC 1.A.43) family.

Its subcellular location is the cell inner membrane. The enzyme catalyses fluoride(in) = fluoride(out). With respect to regulation, na(+) is not transported, but it plays an essential structural role and its presence is essential for fluoride channel function. In terms of biological role, fluoride-specific ion channel. Important for reducing fluoride concentration in the cell, thus reducing its toxicity. The chain is Fluoride-specific ion channel FluC from Legionella pneumophila (strain Paris).